The primary structure comprises 914 residues: Calcium-activated chloride channel regulator 1 (914 aa).

A signal peptide spans 1 to 21 (MGPFKSSVFILILHLLEGALS). Positions 46 to 199 (DETLIQQIKD…GITGTNVVKK (154 aa)) are metalloprotease domain. A Zn(2+)-binding site is contributed by His156. Glu157 is a catalytic residue. 2 residues coordinate Zn(2+): His160 and Asp167. A VWFA domain is found at 306–475 (IVCLVLDKSG…NGLIDAFGAL (170 aa)). 8 N-linked (GlcNAc...) asparagine glycosylation sites follow: Asn503, Asn585, Asn770, Asn804, Asn810, Asn831, Asn836, and Asn890.

Belongs to the CLCR family. In terms of processing, glycosylated. The 125-kDa product is autoproteolytically processed by the metalloprotease domain and yields to two cell-surface-associated subunits, a 90-kDa protein and a group of 37- to 41-kDa proteins. The cleavage is necessary for calcium-activated chloride channel (CaCC) activation activity. Highly expressed in small intestine and colon namely in intestinal basal crypt epithelia and goblet cells, and appendix. Weakly expressed in uterus, testis and kidney. Expressed in the airways epithelium of both asthmatic and healthy patients. Expressed in the bronchial epithelium, especially in mucus-producing goblet cells. Expressed in normal turbinate mucosa and nasal polyp. Expressed in.

The protein localises to the secreted. Its subcellular location is the extracellular space. It is found in the cell membrane. Its function is as follows. May be involved in mediating calcium-activated chloride conductance. May play critical roles in goblet cell metaplasia, mucus hypersecretion, cystic fibrosis and AHR. May be involved in the regulation of mucus production and/or secretion by goblet cells. Involved in the regulation of tissue inflammation in the innate immune response. May play a role as a tumor suppressor. Induces MUC5AC. The sequence is that of Calcium-activated chloride channel regulator 1 (CLCA1) from Homo sapiens (Human).